The primary structure comprises 521 residues: Lipid-translocating exporter-like protein RTA1 (521 aa).

A run of 7 helical transmembrane segments spans residues 186-206 (GAPI…SWQC), 211-231 (AWKL…GYAL), 249-269 (LALF…LELA), 292-312 (VTAF…SGVS), 332-352 (LVAL…SVLF), 371-391 (TLMT…FRLV), and 418-438 (EAYF…LWNV). The segment at 493–521 (THSQPQELYENPNGNGHKKFRLGNGGRAT) is disordered.

The protein belongs to the lipid-translocating exporter (LTE) (TC 9.A.26.1) family.

It localises to the membrane. Lipid-translocating exporter-like protein; part of the gene cluster that mediates the biosynthesis of phomenoic acid, a long chain aliphatic carboxylic acid that does not appear to be essential for pathogenicity but may play a role in allowing to outcompete other fungi in the environmental niche via its antifungal properties. In Leptosphaeria maculans (strain JN3 / isolate v23.1.3 / race Av1-4-5-6-7-8) (Blackleg fungus), this protein is Lipid-translocating exporter-like protein RTA1.